The chain runs to 306 residues: Palmitoyl-protein thioesterase 1 (306 aa).

Positions 1 to 27 (MASPGCLWLLAVALLPWTCASRALQHL) are cleaved as a signal peptide. Cys-6 carries the S-palmitoyl cysteine; by ZDHHC3 and ZDHHC7 lipid modification. 3 disulfides stabilise this stretch: Cys-45–Cys-46, Cys-96–Cys-128, and Cys-152–Cys-160. Residue Ser-115 is part of the active site. N-linked (GlcNAc...) asparagine glycans are attached at residues Asn-197, Asn-212, and Asn-232. Catalysis depends on residues Asp-233 and His-289.

The protein belongs to the palmitoyl-protein thioesterase family. In terms of assembly, interacts with CLN5. Interacts with ATP5F1A and ATP5F1B. In terms of processing, glycosylated.

It is found in the lysosome. The protein resides in the secreted. It localises to the golgi apparatus. Its subcellular location is the endoplasmic reticulum. It carries out the reaction S-hexadecanoyl-L-cysteinyl-[protein] + H2O = L-cysteinyl-[protein] + hexadecanoate + H(+). The catalysed reaction is hexadecanoyl-CoA + H2O = hexadecanoate + CoA + H(+). The enzyme catalyses S-hexadecanoyl-N-acetylcysteamine + H2O = N-acetylcysteamine + hexadecanoate + H(+). It catalyses the reaction S-hexadecanoyl-N-acetylcysteine methyl ester + H2O = N-acetylcysteine methyl ester + hexadecanoate + H(+). With respect to regulation, palmitoylation reduces PPT1 enzymatic activity. Its function is as follows. Has thioesterase activity against fatty acid thioesters with 14 -18 carbons, including palmitoyl-CoA, S-palmitoyl-N-acetylcysteamine, and palmitoylated proteins. In contrast to PPT2, PPT1 can hydrolyze palmitoylated proteins and palmitoylcysteine. The sequence is that of Palmitoyl-protein thioesterase 1 (PPT1) from Homo sapiens (Human).